The chain runs to 153 residues: Large ribosomal subunit protein uL13 (153 aa).

Belongs to the universal ribosomal protein uL13 family. As to quaternary structure, part of the 50S ribosomal subunit.

This protein is one of the early assembly proteins of the 50S ribosomal subunit, although it is not seen to bind rRNA by itself. It is important during the early stages of 50S assembly. This Methylobacterium sp. (strain 4-46) protein is Large ribosomal subunit protein uL13.